The chain runs to 280 residues: Eukaryotic translation initiation factor 3 subunit F-1 (280 aa).

The MPN domain occupies 8 to 138 (VRVHPVVLFQ…LRSYVCIQLG (131 aa)).

The protein belongs to the eIF-3 subunit F family. As to quaternary structure, component of the eukaryotic translation initiation factor 3 (eIF-3) complex. The eIF-3 complex interacts with pix.

The protein resides in the cytoplasm. Component of the eukaryotic translation initiation factor 3 (eIF-3) complex, which is involved in protein synthesis of a specialized repertoire of mRNAs and, together with other initiation factors, stimulates binding of mRNA and methionyl-tRNAi to the 40S ribosome. The eIF-3 complex specifically targets and initiates translation of a subset of mRNAs involved in cell proliferation. This is Eukaryotic translation initiation factor 3 subunit F-1 from Drosophila persimilis (Fruit fly).